The following is a 163-amino-acid chain: NADH-quinone oxidoreductase subunit I (163 aa).

2 4Fe-4S ferredoxin-type domains span residues 55 to 84 and 94 to 123; these read RRYP…IEAE and TRYD…EGPN. Positions 64, 67, 70, 74, 103, 106, 109, and 113 each coordinate [4Fe-4S] cluster.

This sequence belongs to the complex I 23 kDa subunit family. As to quaternary structure, NDH-1 is composed of 14 different subunits. Subunits NuoA, H, J, K, L, M, N constitute the membrane sector of the complex. Requires [4Fe-4S] cluster as cofactor.

Its subcellular location is the cell inner membrane. The catalysed reaction is a quinone + NADH + 5 H(+)(in) = a quinol + NAD(+) + 4 H(+)(out). Its function is as follows. NDH-1 shuttles electrons from NADH, via FMN and iron-sulfur (Fe-S) centers, to quinones in the respiratory chain. The immediate electron acceptor for the enzyme in this species is believed to be ubiquinone. Couples the redox reaction to proton translocation (for every two electrons transferred, four hydrogen ions are translocated across the cytoplasmic membrane), and thus conserves the redox energy in a proton gradient. The protein is NADH-quinone oxidoreductase subunit I of Caulobacter vibrioides (strain ATCC 19089 / CIP 103742 / CB 15) (Caulobacter crescentus).